A 739-amino-acid chain; its full sequence is Mitochondrial proton/calcium exchanger protein (739 aa).

A mitochondrion-targeting transit peptide spans 1-115 (MASILLRSCR…RGWHSSRPVR (115 aa)). The stretch at 115–136 (RDDSVVEKSLKSLKDKNKKLEE) forms a coiled coil. The Mitochondrial intermembrane segment spans residues 116-208 (DDSVVEKSLK…FLRICADLFR (93 aa)). Thr192 bears the Phosphothreonine; by PINK1 mark. A helical membrane pass occupies residues 209–229 (LVPFLVFVVVPFMEFLLPVAV). Over 230–739 (KLFPNMLPST…AEKEVAEVKS (510 aa)) the chain is Mitochondrial matrix. The region spanning 252–537 (KELRVKLELA…TAPVLEGLKE (286 aa)) is the Letm1 RBD domain. Coiled-coil stretches lie at residues 462–490 (NKAK…KRSE) and 537–627 (EEEI…SQLE). At Lys597 the chain carries N6-acetyllysine. Residues 663-698 (IPESKLTSLAAALDENKDGKVNIDDLVKVIELVDKE) form the EF-hand domain. Ca(2+) is bound by residues Asp676, Asn678, Asp680, Lys682, and Asp687. The stretch at 708–739 (AEIVATLEKEEKVEEKEKAKEKAEKEVAEVKS) forms a coiled coil. The segment at 718–739 (EKVEEKEKAKEKAEKEVAEVKS) is disordered.

It belongs to the LETM1 family. As to quaternary structure, homohexamer. Can form 2 complexes: a major (300 kDa) and a minor complex (500-600 kDa). Interacts with BCS1L. Interacts with GHITM. PINK1-mediated phosphorylation at Thr-192, positively regulates its mitochondrial calcium transport activity.

It is found in the mitochondrion inner membrane. It catalyses the reaction Ca(2+)(in) + 2 H(+)(out) = Ca(2+)(out) + 2 H(+)(in). The catalysed reaction is K(+)(in) + H(+)(out) = K(+)(out) + H(+)(in). With respect to regulation, inhibited by ruthenium red or its derivative Ru360. Plays an important role in maintenance of mitochondrial morphology and in mediating either calcium or potassium/proton antiport. Mediates proton-dependent calcium efflux from mitochondrion. Also functions as an electroneutral mitochondrial proton/potassium exchanger. Crucial for the maintenance of mitochondrial tubular networks and for the assembly of the supercomplexes of the respiratory chain. Required for the maintenance of the tubular shape and cristae organization. This is Mitochondrial proton/calcium exchanger protein from Homo sapiens (Human).